The chain runs to 156 residues: ATP synthase subunit b (156 aa).

Residues 3-23 (ITLTIFAQALAFAGLIWIVAT) traverse the membrane as a helical segment.

Belongs to the ATPase B chain family. As to quaternary structure, F-type ATPases have 2 components, F(1) - the catalytic core - and F(0) - the membrane proton channel. F(1) has five subunits: alpha(3), beta(3), gamma(1), delta(1), epsilon(1). F(0) has three main subunits: a(1), b(2) and c(10-14). The alpha and beta chains form an alternating ring which encloses part of the gamma chain. F(1) is attached to F(0) by a central stalk formed by the gamma and epsilon chains, while a peripheral stalk is formed by the delta and b chains.

The protein localises to the cell inner membrane. F(1)F(0) ATP synthase produces ATP from ADP in the presence of a proton or sodium gradient. F-type ATPases consist of two structural domains, F(1) containing the extramembraneous catalytic core and F(0) containing the membrane proton channel, linked together by a central stalk and a peripheral stalk. During catalysis, ATP synthesis in the catalytic domain of F(1) is coupled via a rotary mechanism of the central stalk subunits to proton translocation. In terms of biological role, component of the F(0) channel, it forms part of the peripheral stalk, linking F(1) to F(0). This is ATP synthase subunit b from Xanthomonas oryzae pv. oryzae (strain MAFF 311018).